The following is a 334-amino-acid chain: Malate dehydrogenase (334 aa).

16-22 (GAAGQIA) contacts NAD(+). Positions 97 and 103 each coordinate substrate. NAD(+)-binding positions include asparagine 110, glutamine 117, and 134-136 (VGN). Residues asparagine 136 and arginine 167 each coordinate substrate. The active-site Proton acceptor is the histidine 192.

The protein belongs to the LDH/MDH superfamily. MDH type 2 family.

It carries out the reaction (S)-malate + NAD(+) = oxaloacetate + NADH + H(+). In terms of biological role, catalyzes the reversible oxidation of malate to oxaloacetate. In Nocardia farcinica (strain IFM 10152), this protein is Malate dehydrogenase.